The sequence spans 395 residues: Phosphoprotein (395 aa).

Residues 143–157 (FSSGPSLTDQASSKD) are compositionally biased toward polar residues. Positions 143–183 (FSSGPSLTDQASSKDPNFKRGGEKLTDATKADIGGSGASPG) are disordered. Positions 158-172 (PNFKRGGEKLTDATK) are enriched in basic and acidic residues. Residues 220–283 (ENVKEIIEIL…MTTMKIMDPS (64 aa)) form a multimerization region.

It belongs to the rubulavirus/avulavirus P protein family. In terms of assembly, homotetramer. Interacts (via multimerization domain) with polymerase L; this interaction forms the polymerase L-P complex. Interacts (via N-terminus) with N0 (via Ncore); this interaction allows P to chaperon N0 to avoid N polymerization before encapsidation. Interacts (via C-terminus) with N-RNA template; this interaction positions the polymerase on the template for both transcription and replication.

In terms of biological role, essential cofactor of the RNA polymerase L that plays a central role in the transcription and replication by forming the polymerase complex with RNA polymerase L and recruiting L to the genomic N-RNA template for RNA synthesis. Also plays a central role in the encapsidation of nascent RNA chains by forming the encapsidation complex with the nucleocapsid protein N (N-P complex). Acts as a chaperone for newly synthesized free N protein, so-called N0, allowing encapsidation of nascent RNA chains during replication. The nucleoprotein protein N prevents excessive phosphorylation of P, which leads to down-regulation of viral transcription/ replication. Participates, together with N, in the formation of viral factories (viroplasms), which are large inclusions in the host cytoplasm where replication takes place. This Simian virus 41 (SV41) protein is Phosphoprotein (P/V).